The sequence spans 386 residues: Flap endonuclease 1 (386 aa).

An N-domain region spans residues 1–104 (MGILGLSKLI…GELAKRAERR (104 aa)). Asp34 contributes to the Mg(2+) binding site. Residues Arg47 and Arg70 each coordinate DNA. Residues Asp86, Glu158, Glu160, Asp179, and Asp181 each contribute to the Mg(2+) site. Residues 122 to 253 (EIEKFNRRLV…KRAIELINNY (132 aa)) form an I-domain region. Position 158 (Glu158) interacts with DNA. Residues Gly231 and Asp233 each coordinate DNA. Asp233 contributes to the Mg(2+) binding site. Positions 336 to 344 (TQVRLDSFF) are interaction with PCNA. Positions 351–386 (PNAVHAAKRKAEEAKKSANNKKAKTSGGAARGRRPK) are disordered.

The protein belongs to the XPG/RAD2 endonuclease family. FEN1 subfamily. As to quaternary structure, interacts with PCNA. Three molecules of FEN1 bind to one PCNA trimer with each molecule binding to one PCNA monomer. PCNA stimulates the nuclease activity without altering cleavage specificity. The cofactor is Mg(2+). In terms of processing, phosphorylated. Phosphorylation upon DNA damage induces relocalization to the nuclear plasma.

The protein localises to the nucleus. It is found in the nucleolus. The protein resides in the nucleoplasm. Its subcellular location is the mitochondrion. In terms of biological role, structure-specific nuclease with 5'-flap endonuclease and 5'-3' exonuclease activities involved in DNA replication and repair. During DNA replication, cleaves the 5'-overhanging flap structure that is generated by displacement synthesis when DNA polymerase encounters the 5'-end of a downstream Okazaki fragment. It enters the flap from the 5'-end and then tracks to cleave the flap base, leaving a nick for ligation. Also involved in the long patch base excision repair (LP-BER) pathway, by cleaving within the apurinic/apyrimidinic (AP) site-terminated flap. Acts as a genome stabilization factor that prevents flaps from equilibrating into structures that lead to duplications and deletions. Also possesses 5'-3' exonuclease activity on nicked or gapped double-stranded DNA, and exhibits RNase H activity. Also involved in replication and repair of rDNA and in repairing mitochondrial DNA. The polypeptide is Flap endonuclease 1 (Drosophila persimilis (Fruit fly)).